The following is a 233-amino-acid chain: uncharacterized protein (233 aa).

Positions 64, 66, 68, 69, 143, 162, and 212 each coordinate Zn(2+).

Belongs to the metallo-beta-lactamase superfamily. Glyoxalase II family. Requires Zn(2+) as cofactor.

This is an uncharacterized protein from Bacillus subtilis (strain 168).